Reading from the N-terminus, the 1428-residue chain is Gag-Pol polyprotein (1428 aa).

Residue Gly2 is the site of N-myristoyl glycine; by host attachment. The tract at residues 7–31 (VLSGKKLDSWEKIRLRPGGNKKYRL) is interaction with Gp41. The segment at 8–43 (LSGKKLDSWEKIRLRPGGNKKYRLKHLVWASRELEK) is interaction with host CALM1. The segment at 12–19 (KLDSWEKI) is interaction with host AP3D1. An interaction with membrane phosphatidylinositol 4,5-bisphosphate and RNA region spans residues 14 to 33 (DSWEKIRLRPGGNKKYRLKH). The short motif at 16–22 (WEKIRLR) is the Nuclear export signal element. A Nuclear localization signal motif is present at residues 26 to 32 (NKKYRLK). Positions 73-77 (EELRS) are interaction with membrane phosphatidylinositol 4,5-bisphosphate. The tract at residues 108-130 (QNKNKQRTQQAAANTGSSQNYPI) is disordered. The span at 114 to 130 (RTQQAAANTGSSQNYPI) shows a compositional bias: polar residues. Tyr128 carries the post-translational modification Phosphotyrosine; by host. The interaction with human PPIA/CYPA and NUP153 stretch occupies residues 185-223 (NVVGGHQAAMQMLKDTINEEAAEWDRLHPVHAGPIPPGQ). Positions 273–359 (YSPVSILDIR…GGPGHKARVL (87 aa)) are dimerization/Multimerization of capsid protein p24. 2 consecutive CCHC-type zinc fingers follow at residues 384–401 (IKCFNCGKEGHLAKNCRA) and 405–422 (KGCWKCGKEGHQMKDCTE). The segment at 438-475 (EAREFSSEQTRANSPTSRNLWDGGKDDLPCETGAERQG) is disordered. Polar residues predominate over residues 444-456 (SEQTRANSPTSRN). The segment covering 460–475 (GGKDDLPCETGAERQG) has biased composition (basic and acidic residues). The dimerization of protease stretch occupies residues 482 to 486 (PQITL). Positions 501 to 570 (IEALLDTGAD…TPVNIIGRNM (70 aa)) constitute a Peptidase A2 domain. Catalysis depends on Asp506, which acts as the For protease activity; shared with dimeric partner. Dimerization of protease stretches follow at residues 530-536 (GIGGFIK) and 569-581 (NMLTQIGCTLNFP). One can recognise a Reverse transcriptase domain in the interval 624–814 (EGKISKIGPE…PPFLWMGYEL (191 aa)). The Mg(2+) site is built by Asp690, Asp765, and Asp766. Residues 807 to 815 (FLWMGYELH) form an RT 'primer grip' region. Positions 978 to 994 (WEAWWMEYWQATWIPEW) match the Tryptophan repeat motif motif. The RNase H type-1 domain maps to 1014-1137 (IAGAETFYVD…VDKLVSSGIR (124 aa)). 4 residues coordinate Mg(2+): Asp1023, Glu1058, Asp1078, and Asp1129. The segment at 1143 to 1184 (DGIDKAQEDHEKYHCNWRAMASDFNLPPVVAKEIVASCNKCQ) adopts an Integrase-type zinc-finger fold. 4 residues coordinate Zn(2+): His1152, His1156, Cys1180, and Cys1183. The 151-residue stretch at 1194-1344 (VDCSPGIWQL…SAGERIIDII (151 aa)) folds into the Integrase catalytic domain. Mg(2+) is bound by residues Asp1204, Asp1256, and Glu1292. Residues 1363-1410 (FRVYYRDSRDPIWKGPAKLLWKGEGAVVIQDNSDIKVVPRRKAKIIRD) constitute a DNA-binding region (integrase-type).

As to quaternary structure, homotrimer; further assembles as hexamers of trimers. Interacts with gp41 (via C-terminus). Interacts with host CALM1; this interaction induces a conformational change in the Matrix protein, triggering exposure of the myristate group. Interacts with host AP3D1; this interaction allows the polyprotein trafficking to multivesicular bodies during virus assembly. Part of the pre-integration complex (PIC) which is composed of viral genome, matrix protein, Vpr and integrase. Homodimer; the homodimer further multimerizes as homohexamers or homopentamers. Interacts with human PPIA/CYPA; This interaction stabilizes the capsid. Interacts with human NUP153. Interacts with host PDZD8; this interaction stabilizes the capsid. Interacts with monkey TRIM5; this interaction destabilizes the capsid. In terms of assembly, homodimer, whose active site consists of two apposed aspartic acid residues. As to quaternary structure, heterodimer of p66 RT and p51 RT (RT p66/p51). Heterodimerization of RT is essential for DNA polymerase activity. The overall folding of the subdomains is similar in p66 RT and p51 RT but the spatial arrangements of the subdomains are dramatically different. Homotetramer; may further associate as a homohexadecamer. Part of the pre-integration complex (PIC) which is composed of viral genome, matrix protein, Vpr and integrase. Interacts with human SMARCB1/INI1 and human PSIP1/LEDGF isoform 1. Interacts with human KPNA3; this interaction might play a role in nuclear import of the pre-integration complex. Interacts with human NUP153; this interaction might play a role in nuclear import of the pre-integration complex. Mg(2+) serves as cofactor. In terms of processing, specific enzymatic cleavages by the viral protease yield mature proteins. The protease is released by autocatalytic cleavage. The polyprotein is cleaved during and after budding, this process is termed maturation. Proteolytic cleavage of p66 RT removes the RNase H domain to yield the p51 RT subunit. Nucleocapsid protein p7 might be further cleaved after virus entry. Post-translationally, tyrosine phosphorylated presumably in the virion by a host kinase. Phosphorylation is apparently not a major regulator of membrane association. Phosphorylated possibly by host MAPK1; this phosphorylation is necessary for Pin1-mediated virion uncoating. In terms of processing, methylated by host PRMT6, impairing its function by reducing RNA annealing and the initiation of reverse transcription.

The protein resides in the host cell membrane. The protein localises to the host endosome. Its subcellular location is the host multivesicular body. It is found in the virion membrane. It localises to the host nucleus. The protein resides in the host cytoplasm. The protein localises to the virion. The catalysed reaction is Specific for a P1 residue that is hydrophobic, and P1' variable, but often Pro.. The enzyme catalyses Endohydrolysis of RNA in RNA/DNA hybrids. Three different cleavage modes: 1. sequence-specific internal cleavage of RNA. Human immunodeficiency virus type 1 and Moloney murine leukemia virus enzymes prefer to cleave the RNA strand one nucleotide away from the RNA-DNA junction. 2. RNA 5'-end directed cleavage 13-19 nucleotides from the RNA end. 3. DNA 3'-end directed cleavage 15-20 nucleotides away from the primer terminus.. It catalyses the reaction 3'-end directed exonucleolytic cleavage of viral RNA-DNA hybrid.. It carries out the reaction DNA(n) + a 2'-deoxyribonucleoside 5'-triphosphate = DNA(n+1) + diphosphate. With respect to regulation, protease: The viral protease is inhibited by many synthetic protease inhibitors (PIs), such as amprenavir, atazanavir, indinavir, loprinavir, nelfinavir, ritonavir and saquinavir. Use of protease inhibitors in tritherapy regimens permit more ambitious therapeutic strategies. Reverse transcriptase/ribonuclease H: RT can be inhibited either by nucleoside RT inhibitors (NRTIs) or by non nucleoside RT inhibitors (NNRTIs). NRTIs act as chain terminators, whereas NNRTIs inhibit DNA polymerization by binding a small hydrophobic pocket near the RT active site and inducing an allosteric change in this region. Classical NRTIs are abacavir, adefovir (PMEA), didanosine (ddI), lamivudine (3TC), stavudine (d4T), tenofovir (PMPA), zalcitabine (ddC), and zidovudine (AZT). Classical NNRTIs are atevirdine (BHAP U-87201E), delavirdine, efavirenz (DMP-266), emivirine (I-EBU), and nevirapine (BI-RG-587). The tritherapies used as a basic effective treatment of AIDS associate two NRTIs and one NNRTI. Functionally, mediates, with Gag polyprotein, the essential events in virion assembly, including binding the plasma membrane, making the protein-protein interactions necessary to create spherical particles, recruiting the viral Env proteins, and packaging the genomic RNA via direct interactions with the RNA packaging sequence (Psi). Gag-Pol polyprotein may regulate its own translation, by the binding genomic RNA in the 5'-UTR. At low concentration, the polyprotein would promote translation, whereas at high concentration, the polyprotein would encapsidate genomic RNA and then shut off translation. In terms of biological role, targets the polyprotein to the plasma membrane via a multipartite membrane-binding signal, that includes its myristoylated N-terminus. Matrix protein is part of the pre-integration complex. Implicated in the release from host cell mediated by Vpu. Binds to RNA. Its function is as follows. Forms the conical core that encapsulates the genomic RNA-nucleocapsid complex in the virion. Most core are conical, with only 7% tubular. The core is constituted by capsid protein hexamer subunits. The core is disassembled soon after virion entry. Host restriction factors such as TRIM5-alpha or TRIMCyp bind retroviral capsids and cause premature capsid disassembly, leading to blocks in reverse transcription. Capsid restriction by TRIM5 is one of the factors which restricts HIV-1 to the human species. Host PIN1 apparently facilitates the virion uncoating. On the other hand, interactions with PDZD8 or CYPA stabilize the capsid. Encapsulates and protects viral dimeric unspliced genomic RNA (gRNA). Binds these RNAs through its zinc fingers. Acts as a nucleic acid chaperone which is involved in rearangement of nucleic acid secondary structure during gRNA retrotranscription. Also facilitates template switch leading to recombination. As part of the polyprotein, participates in gRNA dimerization, packaging, tRNA incorporation and virion assembly. Functionally, aspartyl protease that mediates proteolytic cleavages of Gag and Gag-Pol polyproteins during or shortly after the release of the virion from the plasma membrane. Cleavages take place as an ordered, step-wise cascade to yield mature proteins. This process is called maturation. Displays maximal activity during the budding process just prior to particle release from the cell. Also cleaves Nef and Vif, probably concomitantly with viral structural proteins on maturation of virus particles. Hydrolyzes host EIF4GI and PABP1 in order to shut off the capped cellular mRNA translation. The resulting inhibition of cellular protein synthesis serves to ensure maximal viral gene expression and to evade host immune response. Also mediates cleavage of host YTHDF3. Mediates cleavage of host CARD8, thereby activating the CARD8 inflammasome, leading to the clearance of latent HIV-1 in patient CD4(+) T-cells after viral reactivation; in contrast, HIV-1 can evade CARD8-sensing when its protease remains inactive in infected cells prior to viral budding. In terms of biological role, multifunctional enzyme that converts the viral RNA genome into dsDNA in the cytoplasm, shortly after virus entry into the cell. This enzyme displays a DNA polymerase activity that can copy either DNA or RNA templates, and a ribonuclease H (RNase H) activity that cleaves the RNA strand of RNA-DNA heteroduplexes in a partially processive 3' to 5' endonucleasic mode. Conversion of viral genomic RNA into dsDNA requires many steps. A tRNA(3)-Lys binds to the primer-binding site (PBS) situated at the 5'-end of the viral RNA. RT uses the 3' end of the tRNA primer to perform a short round of RNA-dependent minus-strand DNA synthesis. The reading proceeds through the U5 region and ends after the repeated (R) region which is present at both ends of viral RNA. The portion of the RNA-DNA heteroduplex is digested by the RNase H, resulting in a ssDNA product attached to the tRNA primer. This ssDNA/tRNA hybridizes with the identical R region situated at the 3' end of viral RNA. This template exchange, known as minus-strand DNA strong stop transfer, can be either intra- or intermolecular. RT uses the 3' end of this newly synthesized short ssDNA to perform the RNA-dependent minus-strand DNA synthesis of the whole template. RNase H digests the RNA template except for two polypurine tracts (PPTs) situated at the 5'-end and near the center of the genome. It is not clear if both polymerase and RNase H activities are simultaneous. RNase H probably can proceed both in a polymerase-dependent (RNA cut into small fragments by the same RT performing DNA synthesis) and a polymerase-independent mode (cleavage of remaining RNA fragments by free RTs). Secondly, RT performs DNA-directed plus-strand DNA synthesis using the PPTs that have not been removed by RNase H as primers. PPTs and tRNA primers are then removed by RNase H. The 3' and 5' ssDNA PBS regions hybridize to form a circular dsDNA intermediate. Strand displacement synthesis by RT to the PBS and PPT ends produces a blunt ended, linear dsDNA copy of the viral genome that includes long terminal repeats (LTRs) at both ends. Its function is as follows. Catalyzes viral DNA integration into the host chromosome, by performing a series of DNA cutting and joining reactions. This enzyme activity takes place after virion entry into a cell and reverse transcription of the RNA genome in dsDNA. The first step in the integration process is 3' processing. This step requires a complex comprising the viral genome, matrix protein, Vpr and integrase. This complex is called the pre-integration complex (PIC). The integrase protein removes 2 nucleotides from each 3' end of the viral DNA, leaving recessed CA OH's at the 3' ends. In the second step, the PIC enters cell nucleus. This process is mediated through integrase and Vpr proteins, and allows the virus to infect a non dividing cell. This ability to enter the nucleus is specific of lentiviruses, other retroviruses cannot and rely on cell division to access cell chromosomes. In the third step, termed strand transfer, the integrase protein joins the previously processed 3' ends to the 5' ends of strands of target cellular DNA at the site of integration. The 5'-ends are produced by integrase-catalyzed staggered cuts, 5 bp apart. A Y-shaped, gapped, recombination intermediate results, with the 5'-ends of the viral DNA strands and the 3' ends of target DNA strands remaining unjoined, flanking a gap of 5 bp. The last step is viral DNA integration into host chromosome. This involves host DNA repair synthesis in which the 5 bp gaps between the unjoined strands are filled in and then ligated. Since this process occurs at both cuts flanking the HIV genome, a 5 bp duplication of host DNA is produced at the ends of HIV-1 integration. Alternatively, Integrase may catalyze the excision of viral DNA just after strand transfer, this is termed disintegration. The chain is Gag-Pol polyprotein (gag-pol) from Human immunodeficiency virus type 1 group M subtype A (isolate U455) (HIV-1).